The chain runs to 54 residues: uncharacterized protein (54 aa).

This is an uncharacterized protein from Bacillus subtilis (strain 168).